A 552-amino-acid polypeptide reads, in one-letter code: Kumamolisin (552 aa).

Positions 1–17 are enriched in basic and acidic residues; the sequence is MSDMEKPWKEEEKREVL. The interval 1-34 is disordered; it reads MSDMEKPWKEEEKREVLAGHARRQAPQAVDKGPV. One can recognise a Peptidase S53 domain in the interval 193–546; that stretch reads AYTPLDVAQA…IRLLQALLPS (354 aa). Residues Glu-266, Asp-270, and Ser-466 each act as charge relay system in the active site. Ca(2+) is bound by residues Asp-504, Ile-505, Gly-522, Gly-524, and Asp-526.

As to quaternary structure, forms monomeric and dimeric crystals. Requires Ca(2+) as cofactor. Post-translationally, autocatalytically processed.

It is found in the secreted. It carries out the reaction The enzyme preferentially hydrolyzes peptides having an Ala or Pro residue at P2 position and prefers such charged amino acid residues as Glu or Arg at the P2' position. In the oxidized insulin B chain, kumamolysin preferentially cleaves between Leu(15) and Tyr(16).. Its activity is regulated as follows. Inactivated at 22.4 and 37 degrees Celsius, but not at 60 degrees Celsius, by aldehyde-type inhibitors such as acetyl-Ile-Ala-Phe-CHO and acetyl-Ile-Pro-Phe-CHO. Insensitive to the known carboxyl proteinase inhibitors pepstatin, diazoacetyl-DL-norleucine methyl ester (DAN) and 1,2-epoxy-3-(p-nitrophenoxy)propane (EPNP). Not inhibited by Ala-Ala-Phe-chloromethylketone, an inhibitor of the human tripeptidyl-peptidase 1. Functionally, thermostable pepstatin-insensitive serine-carboxyl proteinase. Preferentially hydrolyzes synthetic peptides having an Ala or Pro residue at the P2 position and charged amino acids such as Glu or Arg at the P2' position. In vitro, specifically hydrolyzes the Leu-15-Tyr-16 peptide bond in oxidized insulin B-chain. Additional cleavage of oxidized insulin B-chain at Phe-25-Tyr-26 is detected at a considerably lower rate. Can hydrolyze collagen and the chromogenic substrate azocoll. Shows lower activity with albumin and casein. Shows very weak tripeptidyl peptidase activity. This is Kumamolisin from Bacillus sp. (strain MN-32).